Reading from the N-terminus, the 571-residue chain is Proline--tRNA ligase (571 aa).

Belongs to the class-II aminoacyl-tRNA synthetase family. ProS type 1 subfamily. As to quaternary structure, homodimer.

The protein resides in the cytoplasm. The catalysed reaction is tRNA(Pro) + L-proline + ATP = L-prolyl-tRNA(Pro) + AMP + diphosphate. Catalyzes the attachment of proline to tRNA(Pro) in a two-step reaction: proline is first activated by ATP to form Pro-AMP and then transferred to the acceptor end of tRNA(Pro). As ProRS can inadvertently accommodate and process non-cognate amino acids such as alanine and cysteine, to avoid such errors it has two additional distinct editing activities against alanine. One activity is designated as 'pretransfer' editing and involves the tRNA(Pro)-independent hydrolysis of activated Ala-AMP. The other activity is designated 'posttransfer' editing and involves deacylation of mischarged Ala-tRNA(Pro). The misacylated Cys-tRNA(Pro) is not edited by ProRS. This chain is Proline--tRNA ligase, found in Vibrio atlanticus (strain LGP32) (Vibrio splendidus (strain Mel32)).